The sequence spans 187 residues: Peptide deformylase (187 aa).

The Fe cation site is built by Cys107 and His149. Glu150 is an active-site residue. His153 serves as a coordination point for Fe cation.

It belongs to the polypeptide deformylase family. Fe(2+) serves as cofactor.

It catalyses the reaction N-terminal N-formyl-L-methionyl-[peptide] + H2O = N-terminal L-methionyl-[peptide] + formate. In terms of biological role, removes the formyl group from the N-terminal Met of newly synthesized proteins. Requires at least a dipeptide for an efficient rate of reaction. N-terminal L-methionine is a prerequisite for activity but the enzyme has broad specificity at other positions. In Synechocystis sp. (strain ATCC 27184 / PCC 6803 / Kazusa), this protein is Peptide deformylase.